A 396-amino-acid polypeptide reads, in one-letter code: Elongation factor Tu (396 aa).

Positions 10 to 206 (KPHVNVGTIG…VLDTYIPEPE (197 aa)) constitute a tr-type G domain. A G1 region spans residues 19-26 (GHVDHGKT). 19–26 (GHVDHGKT) lines the GTP pocket. T26 is a binding site for Mg(2+). A G2 region spans residues 60–64 (GITIN). The tract at residues 81–84 (DCPG) is G3. GTP contacts are provided by residues 81–85 (DCPGH) and 136–139 (NKCD). Positions 136 to 139 (NKCD) are G4. The G5 stretch occupies residues 174 to 176 (SAT).

This sequence belongs to the TRAFAC class translation factor GTPase superfamily. Classic translation factor GTPase family. EF-Tu/EF-1A subfamily. As to quaternary structure, monomer.

It localises to the cytoplasm. The catalysed reaction is GTP + H2O = GDP + phosphate + H(+). Functionally, GTP hydrolase that promotes the GTP-dependent binding of aminoacyl-tRNA to the A-site of ribosomes during protein biosynthesis. This is Elongation factor Tu from Psychrobacter arcticus (strain DSM 17307 / VKM B-2377 / 273-4).